Consider the following 56-residue polypeptide: uncharacterized protein (56 aa).

The protein belongs to the archaeal ATPase family.

This is an uncharacterized protein from Methanocaldococcus jannaschii (strain ATCC 43067 / DSM 2661 / JAL-1 / JCM 10045 / NBRC 100440) (Methanococcus jannaschii).